A 513-amino-acid polypeptide reads, in one-letter code: Putative ribose/galactose/methyl galactoside import ATP-binding protein 2 (513 aa).

ABC transporter domains follow at residues 24–260 and 270–510; these read LSAE…VGRE and VPIG…VMEL. ATP is bound at residue 56-63; it reads GENGAGKS.

It belongs to the ABC transporter superfamily. Carbohydrate importer 2 (CUT2) (TC 3.A.1.2) family.

The protein localises to the cell inner membrane. The enzyme catalyses D-ribose(out) + ATP + H2O = D-ribose(in) + ADP + phosphate + H(+). It carries out the reaction D-galactose(out) + ATP + H2O = D-galactose(in) + ADP + phosphate + H(+). Functionally, part of an ABC transporter complex involved in carbohydrate import. Could be involved in ribose, galactose and/or methyl galactoside import. Responsible for energy coupling to the transport system. The sequence is that of Putative ribose/galactose/methyl galactoside import ATP-binding protein 2 from Rhizobium etli (strain ATCC 51251 / DSM 11541 / JCM 21823 / NBRC 15573 / CFN 42).